The primary structure comprises 129 residues: D-ribose pyranase (129 aa).

His20 serves as the catalytic Proton donor. Substrate-binding positions include Asp28, His96, and 118-120 (YAN).

It belongs to the RbsD / FucU family. RbsD subfamily. As to quaternary structure, homodecamer.

It localises to the cytoplasm. It carries out the reaction beta-D-ribopyranose = beta-D-ribofuranose. The protein operates within carbohydrate metabolism; D-ribose degradation; D-ribose 5-phosphate from beta-D-ribopyranose: step 1/2. Catalyzes the interconversion of beta-pyran and beta-furan forms of D-ribose. The chain is D-ribose pyranase from Exiguobacterium sibiricum (strain DSM 17290 / CCUG 55495 / CIP 109462 / JCM 13490 / 255-15).